The following is a 452-amino-acid chain: tRNA modification GTPase MnmE (452 aa).

(6S)-5-formyl-5,6,7,8-tetrahydrofolate is bound by residues arginine 21, glutamate 78, and lysine 118. The 162-residue stretch at glycine 214–glycine 375 folds into the TrmE-type G domain. Asparagine 224 provides a ligand contact to K(+). GTP is bound by residues asparagine 224–serine 229, threonine 243–threonine 249, and aspartate 268–glycine 271. Serine 228 is a binding site for Mg(2+). Residues threonine 243, isoleucine 245, and threonine 248 each contribute to the K(+) site. Threonine 249 is a Mg(2+) binding site. Lysine 452 provides a ligand contact to (6S)-5-formyl-5,6,7,8-tetrahydrofolate.

Belongs to the TRAFAC class TrmE-Era-EngA-EngB-Septin-like GTPase superfamily. TrmE GTPase family. Homodimer. Heterotetramer of two MnmE and two MnmG subunits. K(+) serves as cofactor.

It is found in the cytoplasm. In terms of biological role, exhibits a very high intrinsic GTPase hydrolysis rate. Involved in the addition of a carboxymethylaminomethyl (cmnm) group at the wobble position (U34) of certain tRNAs, forming tRNA-cmnm(5)s(2)U34. The chain is tRNA modification GTPase MnmE from Haemophilus ducreyi (strain 35000HP / ATCC 700724).